A 134-amino-acid polypeptide reads, in one-letter code: Ribosome-binding factor A (134 aa).

Positions 115-134 are disordered; it reads EDQRQERGEIPPGSDELQPD.

The protein belongs to the RbfA family. Monomer. Binds 30S ribosomal subunits, but not 50S ribosomal subunits or 70S ribosomes.

The protein localises to the cytoplasm. In terms of biological role, one of several proteins that assist in the late maturation steps of the functional core of the 30S ribosomal subunit. Associates with free 30S ribosomal subunits (but not with 30S subunits that are part of 70S ribosomes or polysomes). Required for efficient processing of 16S rRNA. May interact with the 5'-terminal helix region of 16S rRNA. The sequence is that of Ribosome-binding factor A from Synechococcus sp. (strain CC9902).